The chain runs to 559 residues: Glucose-6-phosphate isomerase (559 aa).

Catalysis depends on Glu352, which acts as the Proton donor. Residues His383 and Lys511 contribute to the active site.

Belongs to the GPI family.

Its subcellular location is the cytoplasm. The enzyme catalyses alpha-D-glucose 6-phosphate = beta-D-fructose 6-phosphate. Its pathway is carbohydrate biosynthesis; gluconeogenesis. The protein operates within carbohydrate degradation; glycolysis; D-glyceraldehyde 3-phosphate and glycerone phosphate from D-glucose: step 2/4. In terms of biological role, catalyzes the reversible isomerization of glucose-6-phosphate to fructose-6-phosphate. The sequence is that of Glucose-6-phosphate isomerase from Chlorobium phaeobacteroides (strain DSM 266 / SMG 266 / 2430).